Reading from the N-terminus, the 263-residue chain is Proline rich transmembrane protein 1B (263 aa).

Over residues 1-17 (MEAGAGGAGSDTKGGGS) the composition is skewed to gly residues. The interval 1–107 (MEAGAGGAGS…IGFVGEPPPY (107 aa)) is disordered. 2 stretches are compositionally biased toward low complexity: residues 37–47 (QMPAQPALPQL) and 75–86 (DAPAQAAGEAGP). Helical transmembrane passes span 190 to 210 (MMES…IAIV) and 238 to 258 (VLFS…YVVV).

This sequence belongs to the CD225/Dispanin family.

The protein localises to the membrane. In Homo sapiens (Human), this protein is Proline rich transmembrane protein 1B.